Here is a 1054-residue protein sequence, read N- to C-terminus: Filament-like plant protein 6 (1054 aa).

3 coiled-coil regions span residues 64 to 139 (VQIK…VKQH), 174 to 200 (AEDRAAHLDGALKECMRQIRNLKKDHE), and 250 to 341 (SNML…RKKL). Disordered regions lie at residues 359-390 (RDSGDARQKRSPVKVSSPCKSPGGYSSTGSEF) and 448-506 (EAQL…KEKD). Low complexity-rich tracts occupy residues 371–380 (VKVSSPCKSP), 450–461 (QLQQNNSQKSSL), and 470–494 (SNPSSSISVSEDGNDDSGSCSGSLS). Positions 389–463 (EFSLDNAQKF…NNSQKSSLEV (75 aa)) form a coiled coil. Coiled coils occupy residues 637–666 (QNLVEDCHLAEQKLQSIHQDLKNAVSRIHD) and 788–944 (ESDS…IFVL). Positions 951–1054 (FRPQPEQMRS…SRFFSSKSGY (104 aa)) are disordered. Residues 1007 to 1032 (PSDSETSDTTTSPSRVGSRLSRSGSS) are compositionally biased toward low complexity.

This sequence belongs to the FPP family. In terms of assembly, interacts with WPP/MAF proteins.

This Arabidopsis thaliana (Mouse-ear cress) protein is Filament-like plant protein 6 (FPP6).